The following is a 1026-amino-acid chain: MRFFALFIYRPVATILIAAAITLCGILGFRLLPVAPLPQVDFPVIMVSASLPGASPETMASSVATPLERSLGRIAGVNEMTSSSSLGSTRIILEFNFDRDINGAARDVQAAINAAQSLLPGGMPSRPTYRKANPSDAPIMILTLTSESWSQGKLYDFASTQLAQTIAQIDGVGDVDVGGSSLPAVRVGLNPQALFNQGVSLDEVREAIDSANVRRPQGAIEDSVHRWQIQTNDELKTAAEYQPLIIHYNNGAAVRLGDVASVTDSVQDVRNAGMTNAKPAILLMIRKLPEANIIQTVDGIRAKLPELRAMIPAAIDLQIAQDRSPTIRASLQEVEETLAISVALVIMVVFLFLRSGRATLIPAVAVPVSLIGTFAAMYLCGFSLNNLSLMALTIATGFVVDDAIVVLENIARHLEAGMKPLQAALQGTREVGFTVISMSLSLVAVFLPLLLMGGLPGRLLREFAVTLSVAIGISLVVSLTLTPMMCGWMLKSSKPRTQPRKRGVGRLLVALQQGYGTSLKWVLNHTRLVGVVFLGTVALNIWLYIAIPKTFFPEQDTGVLMGGIQADQSISFQAMRGKLQDFMKIIRDDPAVNNVTGFTGGSRVNSGMMFITLKPRGERKETAQQIIDRLRVKLAKEPGARLFLMAVQDIRVGGRQANASYQYTLLSDSLAALREWEPKIRKALSALPQLADVNFDQQDNGAEMNLIYDRDTMSRLGIDVQAANSLLNNAFGQRQISTIYQPMNQYKVVMEVDPRYSQDISALEKMFVINRDGKAIPLSYFAQWRPANAPLSVNHQGLSAASTIAFNLPTGTSLSQATEAINRTMTQLGVPPTVRGSFSGTAQVFQQTMNSQLILIVAAIATVYIVLGILYESYVHPLTILSTLPSAGVGALLALELFNAPFSLIALIGIMLLIGIVKKNAIMMVDFALEAQRSGGLTPAQAIFQACLLRFRPIMMTTLAALFGALPLVLSGGDGSELRQPLGITIVGGLVMSQLLTLYTTPVVYLFFDRLRLRFSRKNSKPVVEI.

A run of 11 helical transmembrane segments spans residues 15–35 (ILIAAAITLCGILGFRLLPVA), 333–353 (EVEETLAISVALVIMVVFLFL), 360–380 (LIPAVAVPVSLIGTFAAMYLC), 387–407 (LSLMALTIATGFVVDDAIVVL), 431–451 (VGFTVISMSLSLVAVFLPLLL), 463–483 (FAVTLSVAIGISLVVSLTLTP), 528–548 (LVGVVFLGTVALNIWLYIAIP), 853–873 (LILIVAAIATVYIVLGILYES), 897–917 (LFNAPFSLIALIGIMLLIGIV), 953–973 (PIMMTTLAALFGALPLVLSGG), and 984–1004 (ITIVGGLVMSQLLTLYTTPVV).

The protein belongs to the resistance-nodulation-cell division (RND) (TC 2.A.6) family. MdtC subfamily. Part of a tripartite efflux system composed of MdtA, MdtB and MdtC. MdtC forms a heteromultimer with MdtB.

Its subcellular location is the cell inner membrane. The protein is Multidrug resistance protein MdtC of Salmonella paratyphi C (strain RKS4594).